A 144-amino-acid chain; its full sequence is High mobility group B protein 2 (144 aa).

2 stretches are compositionally biased toward basic and acidic residues: residues 1 to 12 (MKGAKSKTETRS) and 73 to 94 (AGDK…KAEK). Disordered regions lie at residues 1–42 (MKGA…KRPA), 57–94 (KKEN…KAEK), and 106–144 (YNKK…EDDD). Positions 38-107 (PKRPASAFFV…EYEKNIKAYN (70 aa)) form a DNA-binding region, HMG box. A Phosphoserine modification is found at Ser-125. Positions 127-144 (VNDEDDAEDGSEEEEDDD) are enriched in acidic residues.

This sequence belongs to the HMGB family. Mostly expressed in cotyledons, hypocotyls, leaves, and flowers (excluding pedicels), also present in roots and stems.

The protein localises to the nucleus. It localises to the cytoplasm. Its subcellular location is the cytosol. In terms of biological role, binds preferentially double-stranded DNA. Confers sensitivity to salt and drought stresses. In Arabidopsis thaliana (Mouse-ear cress), this protein is High mobility group B protein 2 (HMGB2).